Here is a 386-residue protein sequence, read N- to C-terminus: Pepsin A (386 aa).

Positions 1–15 are cleaved as a signal peptide; that stretch reads MKWLLLLSLVALSEC. The propeptide at 16–60 is activation peptide; sequence YIYKVPLVKKKSLRKNLMEQGLLQDYLKTHSINPASKYLKEAASM. Residues 74–383 enclose the Peptidase A1 domain; sequence YFGTIGIGTP…DRGNNQVGLA (310 aa). D92 is a catalytic residue. Disulfide bonds link C105–C110 and C266–C270. D275 is an active-site residue. A disulfide bridge connects residues C309 and C342.

This sequence belongs to the peptidase A1 family.

It localises to the secreted. It catalyses the reaction Preferential cleavage: hydrophobic, preferably aromatic, residues in P1 and P1' positions. Cleaves 1-Phe-|-Val-2, 4-Gln-|-His-5, 13-Glu-|-Ala-14, 14-Ala-|-Leu-15, 15-Leu-|-Tyr-16, 16-Tyr-|-Leu-17, 23-Gly-|-Phe-24, 24-Phe-|-Phe-25 and 25-Phe-|-Tyr-26 bonds in the B chain of insulin.. In terms of biological role, shows particularly broad specificity; although bonds involving phenylalanine and leucine are preferred, many others are also cleaved to some extent. The protein is Pepsin A (PGA) of Rhinolophus ferrumequinum (Greater horseshoe bat).